Consider the following 582-residue polypeptide: Threonine--tRNA ligase (582 aa).

The interval 185–478 is catalytic; sequence DHRKLGKELD…LVEHYGGAFP (294 aa). Zn(2+)-binding residues include Cys-278, His-329, and His-455.

This sequence belongs to the class-II aminoacyl-tRNA synthetase family. As to quaternary structure, homodimer. It depends on Zn(2+) as a cofactor.

It is found in the cytoplasm. It catalyses the reaction tRNA(Thr) + L-threonine + ATP = L-threonyl-tRNA(Thr) + AMP + diphosphate + H(+). Its function is as follows. Catalyzes the attachment of threonine to tRNA(Thr) in a two-step reaction: L-threonine is first activated by ATP to form Thr-AMP and then transferred to the acceptor end of tRNA(Thr). Also edits incorrectly charged L-seryl-tRNA(Thr). The chain is Threonine--tRNA ligase from Borrelia garinii subsp. bavariensis (strain ATCC BAA-2496 / DSM 23469 / PBi) (Borreliella bavariensis).